Reading from the N-terminus, the 947-residue chain is Ionotropic receptor 25a (947 aa).

The first 30 residues, 1–30 (MILMNPKTSKILWLLGFLSLLSSFSLEIAA), serve as a signal peptide directing secretion. Over 31 to 562 (QTTQNINVLF…SLFKFLTVLE (532 aa)) the chain is Extracellular. N-linked (GlcNAc...) asparagine glycans are attached at residues Asn-78, Asn-177, Asn-277, and Asn-434. A helical transmembrane segment spans residues 563–583 (TNVWLCILAAYFFTSFLMWIF). Residues 584 to 641 (DRWSPYSYQNNREKYKDDEEKREFNLKECLWFCMTSLTPQGGGEAPKNLSGRLVAATW) are Cytoplasmic-facing. Residues 642–662 (WLFGFIIIASYTANLAAFLTV) form a helical membrane-spanning segment. Topologically, residues 663 to 858 (SRLDTPVESL…DQSDGISIQN (196 aa)) are extracellular. Asn-687, Asn-715, and Asn-762 each carry an N-linked (GlcNAc...) asparagine glycan. The helical transmembrane segment at 859–879 (IGGVFIVIFVGIGMACITLVF) threads the bilayer. Residues 880-947 (EYWWYRYRKN…QYPATFKPRF (68 aa)) lie on the Cytoplasmic side of the membrane.

The protein belongs to the glutamate-gated ion channel (TC 1.A.10.1) family. As to quaternary structure, interacts with nocte. As to expression, in the antenna, detected in neurons of the arista and also detected in sacculus neurons which innervate the first and second chambers (at protein level). Throughout the main body of the antenna, expressed in neurons which innervate the coeloconic class of olfactory sensilla (at protein level). Expressed in multiple cells of the dorsal organ including the dorsal organ cool cells (at protein level). Detected in femur and retina. Expressed in a subset of femur chordonotal neurons and antennal Johnston's Organ neurons.

Its subcellular location is the cell membrane. It is found in the cell projection. The protein resides in the axon. It localises to the dendrite. The protein localises to the perikaryon. Its subcellular location is the cilium. In terms of biological role, integral part of various neural sensory systems in the antenna that provide the neural basis for the response to environmental changes in temperature (thermosensation), humidity (hygrosensation) and odor detection. Required for odor-evoked electrophysiological responses in multiple neuron classes in the antenna and is likely to function as part of an olfactory receptor complex with Ir76a and Ir76b. Together with Ir21a and Ir93a, mediates the response of the larval dorsal organ cool cells, a trio of cool-responsive neurons, to cooling and is required for cool avoidance behavior. Required in chordonotal organ neurons for behavioral synchronization to low-amplitude temperature cycles and mediates circadian clock resetting by temperature. Together with Ir40a and Ir93a, mediates the response of the hydrosensory sacculus neurons to changes in relative humidity, and is required for dry detection and humidiy preference behavior. This Drosophila melanogaster (Fruit fly) protein is Ionotropic receptor 25a.